A 1828-amino-acid polypeptide reads, in one-letter code: AT-rich interactive domain-containing protein 2 (1828 aa).

Ala2 is subject to N-acetylalanine. Ser4 carries the phosphoserine modification. Residues Lys7, Lys15, and Lys119 each participate in a glycyl lysine isopeptide (Lys-Gly) (interchain with G-Cter in SUMO2) cross-link. Residues 13–105 form the ARID domain; sequence RRKGLAFLDE…YLEKYEKVHH (93 aa). An LXXLL motif is present at residues 313 to 317; it reads LRFLL. The RFX-type winged-helix DNA-binding region spans 524–603; that stretch reads ACQWLNAHFE…IHVIGVKRRA (80 aa). A Glycyl lysine isopeptide (Lys-Gly) (interchain with G-Cter in SUMO2) cross-link involves residue Lys555. Phosphoserine is present on residues Ser631 and Ser635. The residue at position 653 (Thr653) is a Phosphothreonine. Ser689 carries the phosphoserine modification. Thr692 is subject to Phosphothreonine. Disordered regions lie at residues 824-843, 962-1028, 1245-1339, 1360-1462, 1483-1503, and 1566-1618; these read TSPQ…SQPQ, LTGQ…QVQV, KEAT…EPVD, KGDG…RPSV, HSGP…TNGT, and SAAQ…HADP. Polar residues predominate over residues 987–1011; that stretch reads AMSSSSTLQSQGPPPTVSQMLSVKR. Over residues 1012–1028 the composition is skewed to low complexity; it reads QQQQQHSPAAPAQQVQV. A compositionally biased stretch (basic and acidic residues) spans 1245–1259; it reads KEATGLHVHERKIEV. A compositionally biased stretch (polar residues) spans 1267–1283; the sequence is RGTTNTSNGDTSESELQ. Residue Ser1294 is modified to Phosphoserine. Polar residues-rich tracts occupy residues 1295–1320 and 1366–1379; these read DSSL…SNGP and LSKN…SNHV. At Ser1385 the chain carries Phosphoserine. 2 stretches are compositionally biased toward polar residues: residues 1390–1400 and 1419–1428; these read QGTSGATQQDT and GSPSTSSMQE. Residues 1453–1462 are compositionally biased toward low complexity; it reads SDVPQQRPSV. Position 1491 is a phosphoserine (Ser1491). Composition is skewed to polar residues over residues 1491–1503 and 1567–1586; these read SALS…TNGT and AAQQ…APQN. Low complexity predominate over residues 1594–1614; it reads AVQVQGQPSSSQPSPVSASSQ. The C2H2-type zinc finger occupies 1626 to 1651; the sequence is FMCLWQSCKKWFQTPSQVFYHAATEH. Residues Lys1695, Lys1710, and Lys1725 each participate in a glycyl lysine isopeptide (Lys-Gly) (interchain with G-Cter in SUMO2) cross-link. A disordered region spans residues 1697 to 1726; the sequence is DEPGQVANQKSSTKQPTVGGTGSAPRAQKA. A compositionally biased stretch (polar residues) spans 1702-1714; it reads VANQKSSTKQPTV.

Belongs to the RFX family. As to quaternary structure, component of the SWI/SNF-B (PBAF) chromatin remodeling complex, at least composed of SMARCA4/BRG1, SMARCB1/BAF47/SNF5, ACTL6A/BAF53A or ACTL6B/BAF53B, SMARCE1/BAF57, SMARCD1/BAF60A, SMARCD2/BAF60B, perhaps SMARCD3/BAF60C, SMARCC1/BAF155, SMARCC2/BAF170, PBRM1/BAF180, ARID2/BAF200 and actin. Interacts with SRF. Forms complexes with SRF and SRF cofactors MYOCD, NKX2-5 and SRFBP1. Highly expressed in testis, expressed in heart, liver and kidney.

It is found in the nucleus. Involved in transcriptional activation and repression of select genes by chromatin remodeling (alteration of DNA-nucleosome topology). Required for the stability of the SWI/SNF chromatin remodeling complex SWI/SNF-B (PBAF). May be involved in targeting the complex to different genes. May be involved in regulating transcriptional activation of cardiac genes. In Mus musculus (Mouse), this protein is AT-rich interactive domain-containing protein 2.